The primary structure comprises 422 residues: D-amino acid dehydrogenase (422 aa).

FAD is bound at residue 3–17 (VVVIGAGVVGTASAW).

This sequence belongs to the DadA oxidoreductase family. Requires FAD as cofactor.

The catalysed reaction is a D-alpha-amino acid + A + H2O = a 2-oxocarboxylate + AH2 + NH4(+). It participates in amino-acid degradation; D-alanine degradation; NH(3) and pyruvate from D-alanine: step 1/1. In terms of biological role, oxidative deamination of D-amino acids. This is D-amino acid dehydrogenase from Paramagnetospirillum magneticum (strain ATCC 700264 / AMB-1) (Magnetospirillum magneticum).